We begin with the raw amino-acid sequence, 758 residues long: 5-methyltetrahydropteroyltriglutamate--homocysteine methyltransferase (758 aa).

Residues 17–20 (RELK) and Lys117 each bind 5-methyltetrahydropteroyltri-L-glutamate. Residues 434–436 (IGS) and Glu487 contribute to the L-homocysteine site. L-methionine contacts are provided by residues 434–436 (IGS) and Glu487. Residues 518–519 (RC) and Trp564 contribute to the 5-methyltetrahydropteroyltri-L-glutamate site. Asp602 provides a ligand contact to L-homocysteine. Residue Asp602 participates in L-methionine binding. Glu608 lines the 5-methyltetrahydropteroyltri-L-glutamate pocket. His644, Cys646, and Glu668 together coordinate Zn(2+). The Proton donor role is filled by His697. A Zn(2+)-binding site is contributed by Cys729.

This sequence belongs to the vitamin-B12 independent methionine synthase family. Requires Zn(2+) as cofactor.

The catalysed reaction is 5-methyltetrahydropteroyltri-L-glutamate + L-homocysteine = tetrahydropteroyltri-L-glutamate + L-methionine. Its pathway is amino-acid biosynthesis; L-methionine biosynthesis via de novo pathway; L-methionine from L-homocysteine (MetE route): step 1/1. Functionally, catalyzes the transfer of a methyl group from 5-methyltetrahydrofolate to homocysteine resulting in methionine formation. This Sodalis glossinidius (strain morsitans) protein is 5-methyltetrahydropteroyltriglutamate--homocysteine methyltransferase.